The sequence spans 257 residues: MDVIPAIDLLEGRCVRLYQGDYDRSQVFSENPVDVAKQWVDQGANRLHIVDLDGAKAGKVVNLGAIEAIAHAVSVPIEIGGGLRDRTSVQQLFNLGIQWAILGTIAVEQPQLVQELCAEFPGQIIIGIDARNGRVATRGWLETSEVLATQLAVQMQELGAAAIIYTDIHRDGTLIGPNLEALRELAAVISIPIIASGGVSSLTDLLSLLALEPQGVTGVIVGRALYTGDILLKEALRAIGPGRIQDIPPNLGFSSFA.

Residue D8 is the Proton acceptor of the active site. D129 acts as the Proton donor in catalysis.

This sequence belongs to the HisA/HisF family.

The protein resides in the cytoplasm. It catalyses the reaction 1-(5-phospho-beta-D-ribosyl)-5-[(5-phospho-beta-D-ribosylamino)methylideneamino]imidazole-4-carboxamide = 5-[(5-phospho-1-deoxy-D-ribulos-1-ylimino)methylamino]-1-(5-phospho-beta-D-ribosyl)imidazole-4-carboxamide. Its pathway is amino-acid biosynthesis; L-histidine biosynthesis; L-histidine from 5-phospho-alpha-D-ribose 1-diphosphate: step 4/9. The polypeptide is 1-(5-phosphoribosyl)-5-[(5-phosphoribosylamino)methylideneamino] imidazole-4-carboxamide isomerase (Nostoc punctiforme (strain ATCC 29133 / PCC 73102)).